The sequence spans 311 residues: tRNA pseudouridine synthase B (311 aa).

Asp49 (nucleophile) is an active-site residue.

The protein belongs to the pseudouridine synthase TruB family. Type 1 subfamily.

It catalyses the reaction uridine(55) in tRNA = pseudouridine(55) in tRNA. Functionally, responsible for synthesis of pseudouridine from uracil-55 in the psi GC loop of transfer RNAs. In Rhizobium meliloti (strain 1021) (Ensifer meliloti), this protein is tRNA pseudouridine synthase B.